Here is an 81-residue protein sequence, read N- to C-terminus: RNA-binding protein KhpA (81 aa).

The 48-residue stretch at 34–81 (KIALRLSVHKSDTGKVIGKQGRTAKAIRTAVFAAGVQSSKKVQFEIFD) folds into the KH domain.

The protein belongs to the KhpA RNA-binding protein family. As to quaternary structure, forms a complex with KhpB.

It is found in the cytoplasm. Functionally, a probable RNA chaperone. Forms a complex with KhpB which binds to cellular RNA and controls its expression. Plays a role in peptidoglycan (PG) homeostasis and cell length regulation. The chain is RNA-binding protein KhpA from Bacillus subtilis (strain 168).